Reading from the N-terminus, the 249-residue chain is MASLNQDQIKILEQSRQRLVQLTRSLASLIGSLNQSDPLPSWSSLQSQAGIISNNLVSISEHLADNKDLLSALVAYPGPSYPGRTQAPTLEQLLRTKLDPRVEDWVSRGRRAGASALEDRGALSESALAELWDWAPVEANQEARRRNWGGNFTLEEREMGIQNVVTGLRRQLEDEDEEASESEEEVEEEEMEVVGVRRRSGAGAGLEFDIAAPAPGSRQQQQQQKAAGPAVPLEDILRYMTTGIPPTQR.

The stretch at 154-200 (LEEREMGIQNVVTGLRRQLEDEDEEASESEEEVEEEEMEVVGVRRRS) forms a coiled coil. The segment at 170 to 249 (RQLEDEDEEA…MTTGIPPTQR (80 aa)) is disordered. The span at 173–192 (EDEDEEASESEEEVEEEEME) shows a compositional bias: acidic residues. Residues 211-232 (AAPAPGSRQQQQQQKAAGPAVP) are compositionally biased toward low complexity.

This sequence belongs to the Mediator complex subunit 8 family. As to quaternary structure, component of the Mediator complex.

Its subcellular location is the nucleus. Component of the Mediator complex, a coactivator involved in the regulated transcription of nearly all RNA polymerase II-dependent genes. Mediator functions as a bridge to convey information from gene-specific regulatory proteins to the basal RNA polymerase II transcription machinery. Mediator is recruited to promoters by direct interactions with regulatory proteins and serves as a scaffold for the assembly of a functional preinitiation complex with RNA polymerase II and the general transcription factors. The chain is Mediator of RNA polymerase II transcription subunit 8 (med8) from Aspergillus fumigatus (strain ATCC MYA-4609 / CBS 101355 / FGSC A1100 / Af293) (Neosartorya fumigata).